The sequence spans 64 residues: Putative H/ACA ribonucleoprotein complex subunit 3 (64 aa).

The protein belongs to the NOP10 family. Component of the small nucleolar ribonucleoprotein particles containing H/ACA-type snoRNAs (H/ACA snoRNPs).

The protein localises to the nucleus. The protein resides in the nucleolus. Its function is as follows. Required for ribosome biogenesis. Part of a complex which catalyzes pseudouridylation of rRNA. This involves the isomerization of uridine such that the ribose is subsequently attached to C5, instead of the normal N1. Pseudouridine ('psi') residues may serve to stabilize the conformation of rRNAs. The polypeptide is Putative H/ACA ribonucleoprotein complex subunit 3 (nola-3) (Caenorhabditis elegans).